The primary structure comprises 295 residues: MKKMQEPIEDPLSKLTQYSGKTFVIKYGGSIMKNKKAEEAFIKDVKYLRKLGINIVIVHGGGPEISRWLELSGIESRFVDGLRVTDEKVIEIVQMVLSGKINKKLSLQFNIDGVNAVGLSGVDNKLIEATKKYVYKGNETIDIGYVGKVTKVNSEFIKELLKGGQVPVIAPIGCDNKGNVYNINADYAAAFISSALDAEKLIILTDVEGVYRNINDPQSIIHEIDIKDVNYYIKEEIIKGGMIPKVQCCASAIENGTKNVQLIDGRNDHCLINDILNYRGTIISYRSGVKCQKAI.

Residues 61-62 (GG), arginine 83, and asparagine 182 contribute to the substrate site.

The protein belongs to the acetylglutamate kinase family. ArgB subfamily.

It is found in the cytoplasm. It carries out the reaction N-acetyl-L-glutamate + ATP = N-acetyl-L-glutamyl 5-phosphate + ADP. Its pathway is amino-acid biosynthesis; L-arginine biosynthesis; N(2)-acetyl-L-ornithine from L-glutamate: step 2/4. Catalyzes the ATP-dependent phosphorylation of N-acetyl-L-glutamate. The protein is Acetylglutamate kinase of Clostridium acetobutylicum (strain ATCC 824 / DSM 792 / JCM 1419 / IAM 19013 / LMG 5710 / NBRC 13948 / NRRL B-527 / VKM B-1787 / 2291 / W).